The sequence spans 116 residues: UPF0342 protein CTC_01059 (116 aa).

The protein belongs to the UPF0342 family.

This Clostridium tetani (strain Massachusetts / E88) protein is UPF0342 protein CTC_01059.